We begin with the raw amino-acid sequence, 206 residues long: LOB domain-containing protein 35 (206 aa).

Positions 4–105 (TCCSACKVMK…EQINSAKNEL (102 aa)) constitute an LOB domain. Residues 184 to 206 (ASTSGGTSATQKTLPFPQNHNQP) form a disordered region.

It belongs to the LOB domain-containing protein family.

The sequence is that of LOB domain-containing protein 35 (LBD35) from Arabidopsis thaliana (Mouse-ear cress).